A 450-amino-acid chain; its full sequence is Glucose-6-phosphate isomerase (450 aa).

Thr-39 is modified (phosphothreonine). Glu-291 acts as the Proton donor in catalysis. Residues His-312 and Lys-426 contribute to the active site.

It belongs to the GPI family.

The protein localises to the cytoplasm. The catalysed reaction is alpha-D-glucose 6-phosphate = beta-D-fructose 6-phosphate. Its pathway is carbohydrate biosynthesis; gluconeogenesis. It functions in the pathway carbohydrate degradation; glycolysis; D-glyceraldehyde 3-phosphate and glycerone phosphate from D-glucose: step 2/4. Functionally, catalyzes the reversible isomerization of glucose-6-phosphate to fructose-6-phosphate. In Bacillus cereus (strain AH187), this protein is Glucose-6-phosphate isomerase.